A 328-amino-acid polypeptide reads, in one-letter code: Gonadotropin-releasing hormone receptor (328 aa).

Residues 1–38 (MQDDTSSEQNPTHCSAINSSVPLVQGALPTLTLSGKIR) lie on the Extracellular side of the membrane. Asn18 is a glycosylation site (N-linked (GlcNAc...) asparagine). A helical membrane pass occupies residues 39–59 (VTVTFFLFLVSTTLNASFLLK). Topologically, residues 60 to 84 (LQKWTQKKEKGKKLSRMKVLLKHLT) are cytoplasmic. Residues 85 to 105 (LANLLETLIVMPLDGMWNITV) traverse the membrane as a helical segment. The Extracellular portion of the chain corresponds to 106–115 (QWYAGELLCK). A disulfide bond links Cys114 and Cys196. A helical membrane pass occupies residues 116-136 (ILSYLKLFSMYAPAFMMVVIS). At 137-160 (LDRSMAITRPLPVQSNRKLEQSMT) the chain is on the cytoplasmic side. A helical transmembrane segment spans residues 161–181 (GLAWGLSSVLAGPQLYIFKMI). Over 182–208 (HLENGPGQTEVFSQCVTHCSFPQWWHQ) the chain is Extracellular. A helical transmembrane segment spans residues 209-229 (AFYNFFTFICLFIIPLLIMLI). The Cytoplasmic segment spans residues 230 to 271 (CNAKIIFTLTQVLQQDSNKLQLNQSKNNIPRARLRTLKMTVA). A helical membrane pass occupies residues 272–292 (FAASFIVCWTPYYVLGLWYWF). The Extracellular portion of the chain corresponds to 293–306 (DPGMLHRMSEPVNH). The chain crosses the membrane as a helical span at residues 307–327 (FFFLFAFLNPCFDPLIYGYFS). Leu328 is a topological domain (cytoplasmic).

Belongs to the G-protein coupled receptor 1 family.

The protein resides in the cell membrane. Its function is as follows. Receptor for gonadotropin releasing hormone (GnRH) that mediates the action of GnRH to stimulate the secretion of the gonadotropic hormones luteinizing hormone (LH) and follicle-stimulating hormone (FSH). This receptor mediates its action by association with G-proteins that activate a phosphatidylinositol-calcium second messenger system. This chain is Gonadotropin-releasing hormone receptor (GNRHR), found in Cavia porcellus (Guinea pig).